A 221-amino-acid chain; its full sequence is Jacalin-related lectin 47 (221 aa).

2 Jacalin-type lectin domains span residues 1-64 (MDSN…YYYP) and 71-217 (SEKL…HVLP).

Belongs to the jacalin lectin family.

This chain is Jacalin-related lectin 47 (JAL47), found in Arabidopsis thaliana (Mouse-ear cress).